Consider the following 168-residue polypeptide: DNA damage-inducible transcript 3 protein (168 aa).

The tract at residues 10–18 is interaction with TRIB3; sequence FGALSSWEL. Positions 10-26 are N-terminal; sequence FGALSSWELEAWYEDLQ. Phosphoserine; by CK2 is present on residues S14, S15, S30, and S31. Positions 31 to 141 are disordered; it reads SDENRGTCVS…QLAEENERLK (111 aa). Positions 76 to 90 are enriched in low complexity; the sequence is SQSPCSPESSQSSLA. 2 positions are modified to phosphoserine; by MAPK14: S78 and S81. A bZIP domain is found at 98 to 161; the sequence is QGRTRKRKQS…EATRRALIDR (64 aa). Residues 100 to 129 form a basic motif region; sequence RTRKRKQSGQSPARAGKQRMKEKEQENERK. Over residues 118–141 the composition is skewed to basic and acidic residues; that stretch reads RMKEKEQENERKVAQLAEENERLK. Residues 133–147 form a leucine-zipper region; the sequence is LAEENERLKQEIERL.

This sequence belongs to the bZIP family. Heterodimer. Interacts with TCF7L2/TCF4, EP300/P300, HDAC1, HDAC5 and HDAC6. Interacts with TRIB3 which blocks its association with EP300/P300. Interacts with FOXO3, CEBPB and ATF4. In terms of processing, ubiquitinated, leading to its degradation by the proteasome. Post-translationally, phosphorylation at serine residues by MAPK14 enhances its transcriptional activation activity while phosphorylation at serine residues by CK2 inhibits its transcriptional activation activity.

It is found in the cytoplasm. It localises to the nucleus. Its function is as follows. Multifunctional transcription factor in ER stress response. Plays an essential role in the response to a wide variety of cell stresses and induces cell cycle arrest and apoptosis in response to ER stress. Plays a dual role both as an inhibitor of CCAAT/enhancer-binding protein (C/EBP) function and as an activator of other genes. Acts as a dominant-negative regulator of C/EBP-induced transcription: dimerizes with members of the C/EBP family, impairs their association with C/EBP binding sites in the promoter regions, and inhibits the expression of C/EBP regulated genes. Positively regulates the transcription of TRIB3, IL6, IL8, IL23, TNFRSF10B/DR5, PPP1R15A/GADD34, BBC3/PUMA, BCL2L11/BIM and ERO1L. Negatively regulates; expression of BCL2 and MYOD1, ATF4-dependent transcriptional activation of asparagine synthetase (ASNS), CEBPA-dependent transcriptional activation of hepcidin (HAMP) and CEBPB-mediated expression of peroxisome proliferator-activated receptor gamma (PPARG). Inhibits the canonical Wnt signaling pathway by binding to TCF7L2/TCF4, impairing its DNA-binding properties and repressing its transcriptional activity. Plays a regulatory role in the inflammatory response through the induction of caspase-11 (CASP4/CASP11) which induces the activation of caspase-1 (CASP1) and both these caspases increase the activation of pro-IL1B to mature IL1B which is involved in the inflammatory response. This Bos taurus (Bovine) protein is DNA damage-inducible transcript 3 protein (DDIT3).